Consider the following 326-residue polypeptide: Ribose-phosphate pyrophosphokinase 4 (326 aa).

The Mg(2+) site is built by Asp140, His142, His151, and Asp155.

This sequence belongs to the ribose-phosphate pyrophosphokinase family.

Its subcellular location is the cytoplasm. It catalyses the reaction D-ribose 5-phosphate + ATP = 5-phospho-alpha-D-ribose 1-diphosphate + AMP + H(+). It participates in metabolic intermediate biosynthesis; 5-phospho-alpha-D-ribose 1-diphosphate biosynthesis; 5-phospho-alpha-D-ribose 1-diphosphate from D-ribose 5-phosphate (route I): step 1/1. 5-phosphoribose 1-diphosphate synthase involved in nucleotide, histidine, and tryptophan biosynthesis. Active in heteromultimeric complexes with other 5-phosphoribose 1-diphosphate synthases (PRS2, PRS3, PRS4 and PRS5). The sequence is that of Ribose-phosphate pyrophosphokinase 4 (PRS4) from Saccharomyces cerevisiae (strain ATCC 204508 / S288c) (Baker's yeast).